The primary structure comprises 424 residues: Inhibin beta A chain (424 aa).

Positions 1-20 (MPLLWLRGFLLASCWIIVRS) are cleaved as a signal peptide. Positions 21–308 (SPTPGSEGHG…EDHPHRRRRR (288 aa)) are excised as a propeptide. A glycan (N-linked (GlcNAc...) asparagine) is linked at Asn165. The span at 264–275 (EVDGDGKKKDGS) shows a compositional bias: basic and acidic residues. A disordered region spans residues 264–306 (EVDGDGKKKDGSDGGLEEEKEQSHRPFLMLQARQSEDHPHRRR). 4 cysteine pairs are disulfide-bonded: Cys312/Cys320, Cys319/Cys389, Cys348/Cys421, and Cys352/Cys423.

It belongs to the TGF-beta family. In terms of assembly, dimeric, linked by one or more disulfide bonds. Inhibin A is a dimer of alpha/INHA and beta-A/INHBA. Activin A is a homodimer of beta-A/INHBA. Activin AB is a dimer of beta-A/INHBA and beta-B/INHBB. Interacts with FST and FSTL3; these interactions prevent activin A interaction to its type II receptor. Activin A interacts with ACVR2A. Activin A interacts with BMPR2. Inhibin A interacts with ACVR1; this interaction creates a non-signaling complex (NSC) that inhibits ACVR1-mediated BMP signaling. Inhibin A interacts with ACVR2A. As to expression, uterus, ovary and liver.

Its subcellular location is the secreted. In terms of biological role, inhibins/activins are involved in regulating a number of diverse functions such as hypothalamic and pituitary hormone secretion, gonadal hormone secretion, germ cell development and maturation, erythroid differentiation, insulin secretion, nerve cell survival, embryonic axial development or bone growth, depending on their subunit composition. Activin A is a homodimer of INHBA that plays a role in several essential biological processes including embryonic development, stem cell maintenance and differentiation, haematopoiesis, cell proliferation and tissue fibrosis. Signals through type I (such as ACVR1B or ACVR1C) and type II receptors (such as ACVR2A, ACVR2B or BMPR2) which, upon ligand binding, phosphorylate SMAD2 and SMAD3 intracellular signaling mediators that form a complex with SMAD4, translocate to the nucleus and modulate gene expression. Can also activate alternative non-canonical intracellular signaling pathways including the p38 MAPK, extracellular signal-regulated kinases 1/2 (ERK1/2) and c-Jun N-terminal kinases (JNKs) to modulate cell migration and differentiation. Alternatively, promotes osteoblastic differentiation via ACVRL1-SMAD1/5/9 pathway. In addition, can engage the type I receptor ACVR1 to form an ACVR1-activin A-type II receptor non-signaling complex (NSC) that renders receptors unavailable for engagement with BMPs, hence resulting in an apparent inhibition of ACVR1-mediated BMP signaling. Its function is as follows. Inhibin A is a dimer of alpha/INHA and beta-A/INHBA that functions as a feedback regulator in the hypothalamic-pituitary-gonadal (HPG) axis. Inhibits the secretion of FSH from the anterior pituitary gland by acting on pituitary gonadotrope cells. Antagonizes activin A by binding to the proteoglycan, betaglycan, and forming a stable complex with and, thereby, sequestering type II activin receptors while excluding type I receptor. This is Inhibin beta A chain (Inhba) from Mus musculus (Mouse).